The primary structure comprises 535 residues: F-box protein At1g56610 (535 aa).

Helical transmembrane passes span phenylalanine 3–isoleucine 23, valine 37–phenylalanine 57, and leucine 82–phenylalanine 102. The 47-residue stretch at threonine 73–phenylalanine 119 folds into the F-box; degenerate domain.

In terms of assembly, part of a SCF (ASK-cullin-F-box) protein ligase complex. Interacts with ASK4.

The protein resides in the membrane. Its pathway is protein modification; protein ubiquitination. Functionally, component of SCF(ASK-cullin-F-box) E3 ubiquitin ligase complexes, which may mediate the ubiquitination and subsequent proteasomal degradation of target proteins. This Arabidopsis thaliana (Mouse-ear cress) protein is F-box protein At1g56610.